The sequence spans 190 residues: Threonylcarbamoyl-AMP synthase (190 aa).

The 184-residue stretch at 7-190 (RAALSDVLQA…ALTGKQFRQG (184 aa)) folds into the YrdC-like domain.

It belongs to the SUA5 family. TsaC subfamily.

Its subcellular location is the cytoplasm. It carries out the reaction L-threonine + hydrogencarbonate + ATP = L-threonylcarbamoyladenylate + diphosphate + H2O. Its function is as follows. Required for the formation of a threonylcarbamoyl group on adenosine at position 37 (t(6)A37) in tRNAs that read codons beginning with adenine. Catalyzes the conversion of L-threonine, HCO(3)(-)/CO(2) and ATP to give threonylcarbamoyl-AMP (TC-AMP) as the acyladenylate intermediate, with the release of diphosphate. This Yersinia enterocolitica serotype O:8 / biotype 1B (strain NCTC 13174 / 8081) protein is Threonylcarbamoyl-AMP synthase.